The sequence spans 198 residues: Nucleoid occlusion factor SlmA (198 aa).

The 61-residue stretch at 10 to 70 (NRREEILQSL…SLIEFIEDSL (61 aa)) folds into the HTH tetR-type domain. The segment at residues 33–52 (TTAKLAASVGVSEAALYRHF) is a DNA-binding region (H-T-H motif). Residues 117–144 (EQDRLQGRINQLFERIEAQLRQVLREKR) are a coiled coil.

This sequence belongs to the nucleoid occlusion factor SlmA family. In terms of assembly, homodimer. Interacts with FtsZ.

It is found in the cytoplasm. Its subcellular location is the nucleoid. Functionally, required for nucleoid occlusion (NO) phenomenon, which prevents Z-ring formation and cell division over the nucleoid. Acts as a DNA-associated cell division inhibitor that binds simultaneously chromosomal DNA and FtsZ, and disrupts the assembly of FtsZ polymers. SlmA-DNA-binding sequences (SBS) are dispersed on non-Ter regions of the chromosome, preventing FtsZ polymerization at these regions. The protein is Nucleoid occlusion factor SlmA of Escherichia coli O127:H6 (strain E2348/69 / EPEC).